A 529-amino-acid polypeptide reads, in one-letter code: Peptide chain release factor 3 (529 aa).

The region spanning 11–280 (AKRRTFAIIS…GLVEWAPAPM (270 aa)) is the tr-type G domain. Residues 20-27 (SHPDAGKT), 88-92 (DTPGH), and 142-145 (NKLD) contribute to the GTP site.

This sequence belongs to the TRAFAC class translation factor GTPase superfamily. Classic translation factor GTPase family. PrfC subfamily.

The protein resides in the cytoplasm. Increases the formation of ribosomal termination complexes and stimulates activities of RF-1 and RF-2. It binds guanine nucleotides and has strong preference for UGA stop codons. It may interact directly with the ribosome. The stimulation of RF-1 and RF-2 is significantly reduced by GTP and GDP, but not by GMP. This Yersinia pseudotuberculosis serotype O:1b (strain IP 31758) protein is Peptide chain release factor 3.